A 513-amino-acid polypeptide reads, in one-letter code: Light-independent protochlorophyllide reductase subunit B (513 aa).

D36 contacts [4Fe-4S] cluster. D299 functions as the Proton donor in the catalytic mechanism. 434-435 is a substrate binding site; it reads GM.

It belongs to the ChlB/BchB/BchZ family. As to quaternary structure, protochlorophyllide reductase is composed of three subunits; ChlL, ChlN and ChlB. Forms a heterotetramer of two ChlB and two ChlN subunits. It depends on [4Fe-4S] cluster as a cofactor.

It is found in the plastid. Its subcellular location is the chloroplast. The enzyme catalyses chlorophyllide a + oxidized 2[4Fe-4S]-[ferredoxin] + 2 ADP + 2 phosphate = protochlorophyllide a + reduced 2[4Fe-4S]-[ferredoxin] + 2 ATP + 2 H2O. The protein operates within porphyrin-containing compound metabolism; chlorophyll biosynthesis (light-independent). Component of the dark-operative protochlorophyllide reductase (DPOR) that uses Mg-ATP and reduced ferredoxin to reduce ring D of protochlorophyllide (Pchlide) to form chlorophyllide a (Chlide). This reaction is light-independent. The NB-protein (ChlN-ChlB) is the catalytic component of the complex. The polypeptide is Light-independent protochlorophyllide reductase subunit B (Staurastrum punctulatum (Green alga)).